We begin with the raw amino-acid sequence, 293 residues long: Urease accessory protein UreD (293 aa).

This sequence belongs to the UreD family. In terms of assembly, ureD, UreF and UreG form a complex that acts as a GTP-hydrolysis-dependent molecular chaperone, activating the urease apoprotein by helping to assemble the nickel containing metallocenter of UreC. The UreE protein probably delivers the nickel.

The protein resides in the cytoplasm. Functionally, required for maturation of urease via the functional incorporation of the urease nickel metallocenter. This chain is Urease accessory protein UreD, found in Cupriavidus metallidurans (strain ATCC 43123 / DSM 2839 / NBRC 102507 / CH34) (Ralstonia metallidurans).